The sequence spans 443 residues: MALQNIGAGNSDDAFYRYKMPRMVTKIEGRGNGIKTNVVNMVDIAKRLARPASYTTKYFGCELGAQSKFDEKTGTSHVNGAHETAKLAGLLEIFIKKYVQCYGCGNPETEILITKNQMIQLKCAACGFVSDVDMRDKLTTFIVKNPPEVKKGSKDKKAMRRAEKERLKEGEAADEELKKVKKEVKKKGSSSAKDGTAKSTISKKKGSGSDEDRRSPTHKQIEEKEEAKDEDDDDDDGVQWLTDTSLDASRQRIKEQLSAVTADMVMLTTDEPEKKKKAASNQNGGSQNGNSKNYGTVVAEVKANLKKGFGASELLSHLAALPVPAQEKMSALVEALFEGTEKGFGRETLKKKNYFAAAVAEEGSQILLLHAIEEFCCKPNSNALKEVALVLKTLYDADVLEEEAIVLWYQKGLKGDNKNSKIWKNAQPFIDWLQNAESESDEE.

29–36 (GRGNGIKT) contacts GTP. Over residues 147 to 178 (PEVKKGSKDKKAMRRAEKERLKEGEAADEELK) the composition is skewed to basic and acidic residues. 2 disordered regions span residues 147-244 (PEVK…LTDT) and 271-293 (EPEKKKKAASNQNGGSQNGNSKN). The segment covering 179–188 (KVKKEVKKKG) has biased composition (basic residues). Residues 207–227 (SGSDEDRRSPTHKQIEEKEEA) show a composition bias toward basic and acidic residues. Over residues 228–237 (KDEDDDDDDG) the composition is skewed to acidic residues. Positions 280-291 (SNQNGGSQNGNS) are enriched in low complexity. Positions 284–443 (GGSQNGNSKN…QNAESESDEE (160 aa)) constitute a W2 domain.

The protein belongs to the eIF-2-beta/eIF-5 family.

In terms of biological role, catalyzes the hydrolysis of GTP bound to the 40S ribosomal initiation complex (40S.mRNA.Met-tRNA[F].eIF-2.GTP) with the subsequent joining of a 60S ribosomal subunit resulting in the release of eIF-2 and the guanine nucleotide. The subsequent joining of a 60S ribosomal subunit results in the formation of a functional 80S initiation complex (80S.mRNA.Met-tRNA[F]). This chain is Eukaryotic translation initiation factor 5 (EIF5), found in Phaseolus vulgaris (Kidney bean).